The primary structure comprises 999 residues: Probable K(+)/H(+) antiporter subunit A/B (999 aa).

The tract at residues 1–20 (MTRPASVLAGPKSRPPIHSQ) is disordered. Transmembrane regions (helical) follow at residues 31 to 48 (LLSV…IAIF), 63 to 85 (AIAL…GGVL), 106 to 128 (FAWL…ARYY), 138 to 160 (FFAL…NLIL), 162 to 181 (AVFW…YWHH), 191 to 213 (MALT…IGKI), 233 to 255 (PLYG…QFPF), 270 to 292 (SAYL…FWPV), 299 to 321 (WFWI…AIFQ), 336 to 358 (LGLI…VFHI), 389 to 411 (GLFH…MAGV), 442 to 464 (YVAT…GVFF), 488 to 510 (FLVL…FLHT), 530 to 552 (GWNI…YFLM), 604 to 621 (RLLV…LLLG), 636 to 653 (AFAL…GSAY), 660 to 682 (LASL…WLSA), 686 to 708 (AVTQ…RWLP), 729 to 751 (LRDL…TVMT), 788 to 807 (TLGE…ALLL), 846 to 868 (FIPA…FLFL), 878 to 900 (FAAG…TRWV), 913 to 935 (SIGL…PFLT), and 955 to 977 (ILFD…IALA).

The protein in the N-terminal section; belongs to the CPA3 antiporters (TC 2.A.63) subunit A family. This sequence in the C-terminal section; belongs to the CPA3 antiporters (TC 2.A.63) subunit B family. In terms of assembly, may form a heterooligomeric complex that consists of six subunits: PhaAB, PhaC, PhaD, PhaE, PhaF and PhaG.

It is found in the cell membrane. Part of a K(+) efflux system which is required for the adaptation of R.meliloti to alkaline pH as well as for the infection process during symbiotic nodule development. This Rhizobium meliloti (strain 1021) (Ensifer meliloti) protein is Probable K(+)/H(+) antiporter subunit A/B (phaAB).